We begin with the raw amino-acid sequence, 565 residues long: 2-isopropylmalate synthase (565 aa).

The 276-residue stretch at 37 to 312 folds into the Pyruvate carboxyltransferase domain; that stretch reads PRWCSVDLRD…DPMIDLSDID (276 aa). Mg(2+) contacts are provided by Asp-46, His-251, His-253, and Asn-287. The regulatory domain stretch occupies residues 446 to 565; that stretch reads EGGDPAASLE…SAVNRASRES (120 aa).

The protein belongs to the alpha-IPM synthase/homocitrate synthase family. LeuA type 2 subfamily. Homodimer. Requires Mg(2+) as cofactor.

Its subcellular location is the cytoplasm. It carries out the reaction 3-methyl-2-oxobutanoate + acetyl-CoA + H2O = (2S)-2-isopropylmalate + CoA + H(+). Its pathway is amino-acid biosynthesis; L-leucine biosynthesis; L-leucine from 3-methyl-2-oxobutanoate: step 1/4. Its function is as follows. Catalyzes the condensation of the acetyl group of acetyl-CoA with 3-methyl-2-oxobutanoate (2-ketoisovalerate) to form 3-carboxy-3-hydroxy-4-methylpentanoate (2-isopropylmalate). This chain is 2-isopropylmalate synthase, found in Parafrankia sp. (strain EAN1pec).